The primary structure comprises 275 residues: Lectin (275 aa).

A signal peptide spans 1–30 (MASLQTQMISFYLIFLSILLTTIFFFKVNS). D-glucose-binding residues include D111 and G129. Residues E149 and D151 each contribute to the Mn(2+) site. Residues D151, F153, N155, and D159 each coordinate Ca(2+). Mn(2+) contacts are provided by D159 and H166. Residues 211 to 217 (NSLEEEN) constitute a propeptide that is removed on maturation. 2 residues coordinate D-glucose: G246 and A247. A propeptide spanning residues 270–275 (KQAADA) is cleaved from the precursor.

Belongs to the leguminous lectin family. Heterotetramer of two alpha and two beta chains. The mature form consists of two chains, alpha and beta, produced by cleavage of the immature protein. These remain cleaved, yet fold together to form one subunit.

Functionally, D-mannose specific lectin. The chain is Lectin from Lens culinaris (Lentil).